Consider the following 341-residue polypeptide: KH domain-containing RNA-binding protein QKI (341 aa).

Positions 11–82 (PKPTPDYLMQ…PDAVGPIVQL (72 aa)) are qua1 domain; involved in homodimerization. In terms of domain architecture, KH spans 87 to 153 (YVPVKEYPDF…WEHLNEDLHV (67 aa)). Residues 182–213 (AAEGEDSLKKMQLMELAILNGTYRDANIKSPA) form a qua2 domain; involved in RNA binding region. Ser188 bears the Phosphoserine mark. The residue at position 227 (Arg227) is an Omega-N-methylarginine. At Arg242 the chain carries Asymmetric dimethylarginine; by CARM1; alternate. The residue at position 242 (Arg242) is an Omega-N-methylarginine; alternate. Arg256 carries the omega-N-methylarginine modification. The short motif at 276–279 (PPGP) is the SH3-binding element. The Nuclear localization signal signature appears at 324–330 (RVHPYQR).

The protein belongs to the quaking family. In terms of assembly, homodimer; does not require RNA to homodimerize. Able to heterodimerize with BICC1. Post-translationally, methylated by PRMT1. Tyrosine phosphorylated at its C-terminus, probably by FYN. Phosphorylation leads to decreased mRNA-binding affinity, affecting transport and/or stabilization of MBP mRNA. In terms of processing, ubiquitinated by RNF6 in macrophages, leading to its degradation.

Its subcellular location is the nucleus. The protein localises to the cytoplasm. Functionally, RNA reader protein, which recognizes and binds specific RNAs, thereby regulating RNA metabolic processes, such as pre-mRNA splicing, circular RNA (circRNA) formation, mRNA export, mRNA stability and/or translation. Involved in various cellular processes, such as mRNA storage into stress granules, apoptosis, lipid deposition, interferon response, glial cell fate and development. Binds to the 5'-NACUAAY-N(1,20)-UAAY-3' RNA core sequence. Acts as a mRNA modification reader that specifically recognizes and binds mRNA transcripts modified by internal N(7)-methylguanine (m7G). Promotes the formation of circular RNAs (circRNAs) during the epithelial to mesenchymal transition and in cardiomyocytes: acts by binding to sites flanking circRNA-forming exons. CircRNAs are produced by back-splicing circularization of pre-mRNAs. Plays a central role in myelinization via 3 distinct mechanisms. First, acts by protecting and promoting stability of target mRNAs such as MBP, SIRT2 and CDKN1B, which promotes oligodendrocyte differentiation. Second, participates in mRNA transport by regulating the nuclear export of MBP mRNA. Finally, indirectly regulates mRNA splicing of MAG pre-mRNA during oligodendrocyte differentiation by acting as a negative regulator of MAG exon 12 alternative splicing: acts by binding to HNRNPA1 mRNA splicing factor, preventing its translation. Involved in microglia differentiation and remyelination by regulating microexon alternative splicing of the Rho GTPase pathway. Involved in macrophage differentiation: promotes monocyte differentiation by regulating pre-mRNA splicing in naive peripheral blood monocytes. Acts as an important regulator of muscle development: required for the contractile function of cardiomyocytes by regulating alternative splicing of cardiomyocyte transcripts. Acts as a negative regulator of thermogenesis by decreasing stability, nuclear export and translation of mRNAs encoding PPARGC1A and UCP1. Also required for visceral endoderm function and blood vessel development. May also play a role in smooth muscle development. In addition to its RNA-binding activity, also acts as a nuclear transcription coactivator for SREBF2/SREBP2. The protein is KH domain-containing RNA-binding protein QKI of Bos taurus (Bovine).